We begin with the raw amino-acid sequence, 293 residues long: Ribosomal protein L11 methyltransferase (293 aa).

Positions 145, 166, 188, and 230 each coordinate S-adenosyl-L-methionine.

This sequence belongs to the methyltransferase superfamily. PrmA family.

It is found in the cytoplasm. It catalyses the reaction L-lysyl-[protein] + 3 S-adenosyl-L-methionine = N(6),N(6),N(6)-trimethyl-L-lysyl-[protein] + 3 S-adenosyl-L-homocysteine + 3 H(+). In terms of biological role, methylates ribosomal protein L11. This chain is Ribosomal protein L11 methyltransferase, found in Shewanella halifaxensis (strain HAW-EB4).